Here is a 440-residue protein sequence, read N- to C-terminus: Xaa-Pro dipeptidase (440 aa).

The Mn(2+) site is built by aspartate 244, aspartate 255, histidine 335, glutamate 380, and glutamate 419.

The protein belongs to the peptidase M24B family. Bacterial-type prolidase subfamily. The cofactor is Mn(2+).

It catalyses the reaction Xaa-L-Pro dipeptide + H2O = an L-alpha-amino acid + L-proline. Splits dipeptides with a prolyl residue in the C-terminal position. The sequence is that of Xaa-Pro dipeptidase from Shewanella baltica (strain OS223).